Reading from the N-terminus, the 453-residue chain is Ribosome biogenesis protein YTM1 (453 aa).

The ubiquitin-like (UBL) domain stretch occupies residues 19-102 (VKVRFFTNEE…ETVIDLQYTR (84 aa)). A sufficient for interaction with ERB1 and association with 66S pre-ribosomes region spans residues 112–453 (SFTNEDWISS…KKIDIYREAN (342 aa)). 7 WD repeats span residues 128–166 (GHGA…ESQY), 168–206 (GHSG…VEEG), 218–257 (GHKG…MSAV), 292–332 (GHGQ…CVDT), 334–373 (STGF…STEQ), 380–420 (GHTN…AMYT), and 422–453 (GKGG…REAN).

Belongs to the WD repeat WDR12/YTM1 family. Component of the NOP7 complex, composed of ERB1, NOP7 and YTM1. The complex is held together by ERB1, which interacts with NOP7 via its N-terminal domain and with YTM1 via a high-affinity interaction between the seven-bladed beta-propeller domains of the 2 proteins. The NOP7 complex associates with the 66S pre-ribosome. Interacts (via UBL domain) with MDN1 (via VWFA/MIDAS domain).

The protein resides in the nucleus. Its subcellular location is the nucleolus. It is found in the nucleoplasm. Functionally, component of the NOP7 complex, which is required for maturation of the 25S and 5.8S ribosomal RNAs and formation of the 60S ribosome. This chain is Ribosome biogenesis protein YTM1, found in Meyerozyma guilliermondii (strain ATCC 6260 / CBS 566 / DSM 6381 / JCM 1539 / NBRC 10279 / NRRL Y-324) (Yeast).